We begin with the raw amino-acid sequence, 727 residues long: Glycerol-3-phosphate dehydrogenase, mitochondrial (727 aa).

A mitochondrion-targeting transit peptide spans 1–42 (MAFQKAVKGTILVGGGALATVLGLSQFAHYRRKQMNLAYVKA). 71–99 (DILVIGGGATGSGCALDAVTRGLKTALVE) provides a ligand contact to FAD. Tyrosine 601 is subject to Phosphotyrosine. EF-hand domains are found at residues 623–658 (SDID…INVQ) and 659–694 (MDEN…IQKG). Residues aspartate 672, asparagine 674, asparagine 676, glutamine 678, and glutamate 683 each coordinate Ca(2+).

The protein belongs to the FAD-dependent glycerol-3-phosphate dehydrogenase family. Requires FAD as cofactor.

It is found in the mitochondrion. It carries out the reaction a quinone + sn-glycerol 3-phosphate = dihydroxyacetone phosphate + a quinol. Its pathway is polyol metabolism; glycerol degradation via glycerol kinase pathway; glycerone phosphate from sn-glycerol 3-phosphate (aerobic route): step 1/1. Calcium-binding enhance the activity of the enzyme. Functionally, calcium-responsive mitochondrial glycerol-3-phosphate dehydrogenase which seems to be a key component of the pancreatic beta-cell glucose-sensing device. This Macaca fascicularis (Crab-eating macaque) protein is Glycerol-3-phosphate dehydrogenase, mitochondrial (GPD2).